We begin with the raw amino-acid sequence, 549 residues long: MFS-type transporter TwmF (549 aa).

Helical transmembrane passes span 29–49 (IVIG…VLTI), 63–83 (NFIW…PLFG), 99–119 (VAIF…AMLI), and 126–146 (GVGS…LVPL). Residue Asn-151 is glycosylated (N-linked (GlcNAc...) asparagine). 10 consecutive transmembrane segments (helical) span residues 155–175 (ILMS…GAIV), 182–202 (WVFY…FIFL), 221–241 (LVGN…LSYA), 249–269 (SWHT…FAGL), 291–311 (IILA…LFFL), 328–348 (VALL…AIAL), 355–375 (KPVH…FTLF), 390–410 (IVAF…QAFI), 421–441 (AWYF…AAIF), and 502–522 (VSIA…DVGL).

Belongs to the major facilitator superfamily.

It localises to the membrane. MFS efflux transporter; part of the gene cluster that mediates the biosynthesis of wortmanamides A and B, reduced long-chain polyketides amidated with a specific omega-amino acid, 5-aminopentanoic acid (5PA). This is MFS-type transporter TwmF from Talaromyces wortmannii (Penicillium wortmannii).